Consider the following 148-residue polypeptide: NPC intracellular cholesterol transporter 2 homolog a (148 aa).

An N-terminal signal peptide occupies residues 1–16; the sequence is MLRYAVIACAALVVFA. 3 cysteine pairs are disulfide-bonded: C24–C140, C39–C46, and C92–C99. Residue N51 is glycosylated (N-linked (GlcNAc...) asparagine).

This sequence belongs to the NPC2 family. As to expression, broadly expressed with a higher level of expression in many tissues, including midgut, salivary gland and ventral nerve cord.

Its subcellular location is the secreted. Functionally, functions redundantly with Npc2b in regulating sterol homeostasis and ecdysteroid biosynthesis, probably by controlling the availability of sterol substrate. The polypeptide is NPC intracellular cholesterol transporter 2 homolog a (Drosophila melanogaster (Fruit fly)).